Reading from the N-terminus, the 62-residue chain is DNA-binding protein 7 (62 aa).

The protein belongs to the 7 kDa DNA-binding/endoribonuclease P2 family. In terms of assembly, monomer.

The protein resides in the cytoplasm. Its function is as follows. Can constrain negative DNA supercoils. May be involved in maintaining the integrity of the genome at high temperature. The sequence is that of DNA-binding protein 7 from Metallosphaera cuprina (strain Ar-4).